Reading from the N-terminus, the 222-residue chain is Pyridoxine/pyridoxamine 5'-phosphate oxidase (222 aa).

Substrate is bound by residues 14 to 17 (RRNY) and lysine 71. Residues 66 to 71 (RTVLLK), 81 to 82 (FT), arginine 87, lysine 88, and glutamine 110 each bind FMN. Residues tyrosine 128, arginine 132, and serine 136 each contribute to the substrate site. Residues 145 to 146 (QS) and tryptophan 190 each bind FMN. A substrate-binding site is contributed by 196–198 (RLN). Arginine 200 contributes to the FMN binding site.

It belongs to the pyridoxamine 5'-phosphate oxidase family. In terms of assembly, homodimer. FMN serves as cofactor.

It catalyses the reaction pyridoxamine 5'-phosphate + O2 + H2O = pyridoxal 5'-phosphate + H2O2 + NH4(+). It carries out the reaction pyridoxine 5'-phosphate + O2 = pyridoxal 5'-phosphate + H2O2. Its pathway is cofactor metabolism; pyridoxal 5'-phosphate salvage; pyridoxal 5'-phosphate from pyridoxamine 5'-phosphate: step 1/1. It functions in the pathway cofactor metabolism; pyridoxal 5'-phosphate salvage; pyridoxal 5'-phosphate from pyridoxine 5'-phosphate: step 1/1. Its function is as follows. Catalyzes the oxidation of either pyridoxine 5'-phosphate (PNP) or pyridoxamine 5'-phosphate (PMP) into pyridoxal 5'-phosphate (PLP). This chain is Pyridoxine/pyridoxamine 5'-phosphate oxidase, found in Prochlorococcus marinus (strain MIT 9303).